A 250-amino-acid chain; its full sequence is Probable replication-associated protein repA2 (250 aa).

It belongs to the IncFII RepA family.

In terms of biological role, this protein is essential for plasmid replication; it is involved in copy control functions. The sequence is that of Probable replication-associated protein repA2 (repA2) from Buchnera aphidicola subsp. Schizaphis graminum (strain Sg).